A 516-amino-acid chain; its full sequence is Myocyte-specific enhancer factor 2A homolog (516 aa).

Residues 1–100 are interaction with hdac9; that stretch reads MGRKKIQITR…KGLNGCESPD (100 aa). In terms of domain architecture, MADS-box spans 3-57; sequence RKKIQITRIMDERNRQVTFTKRKFGLMKKAYELSVLCDCEIALIIFNSSNKLFQY. A DNA-binding region (mef2-type) is located at residues 58–86; sequence ASTDMDKVLLKYTEYNEPHESRTNSDIVE. Residues 318-339 are disordered; the sequence is PSSKGMMPPLNTQRVTSSQGTQ. Residues 327–339 are compositionally biased toward polar residues; that stretch reads LNTQRVTSSQGTQ. Thr-343 is subject to Phosphothreonine; by NLK. Ser-386 is modified (phosphoserine; by NLK). The span at 420-433 shows a compositional bias: polar residues; that stretch reads GSNLSINTNQNINI. The segment at 420–516 is disordered; the sequence is GSNLSINTNQ…KRMRMDAWVT (97 aa). Residues 465 to 475 are compositionally biased toward low complexity; that stretch reads DSLSSSSSSYD. Composition is skewed to basic and acidic residues over residues 476 to 486 and 497 to 516; these read GSDREDVRNDF and NNED…AWVT.

It belongs to the MEF2 family. In terms of assembly, interacts with hdac9 and nlk2. As to expression, restricted to the somitic mesoderm of early embryos. Expressed in the head region of neurula stage embryos and in body muscle (myotomes) of the tadpole. Expressed in all tissues examined in the adult.

The protein localises to the nucleus. May regulate muscle-specific transcription in the embryo and may regulate transcription of a variety of cell types in the adult. Binds to the sequence 5'-CTA[TA]4TAR-3'. Acts downstream of nlk2 in anterior neural development, including eye formation. The chain is Myocyte-specific enhancer factor 2A homolog (mef2a) from Xenopus laevis (African clawed frog).